Consider the following 216-residue polypeptide: Uracil-DNA glycosylase (216 aa).

Residue Asp59 is the Proton acceptor of the active site.

Belongs to the uracil-DNA glycosylase (UDG) superfamily. UNG family.

It localises to the cytoplasm. The enzyme catalyses Hydrolyzes single-stranded DNA or mismatched double-stranded DNA and polynucleotides, releasing free uracil.. Functionally, excises uracil residues from the DNA which can arise as a result of misincorporation of dUMP residues by DNA polymerase or due to deamination of cytosine. This Staphylococcus epidermidis (strain ATCC 35984 / DSM 28319 / BCRC 17069 / CCUG 31568 / BM 3577 / RP62A) protein is Uracil-DNA glycosylase.